The primary structure comprises 551 residues: Cation/acetate symporter ActP (551 aa).

13 helical membrane-spanning segments follow: residues 34 to 54 (IEAI…TYWA), 77 to 97 (GLAI…SALV), 104 to 124 (GLIY…LIAE), 150 to 170 (LSAC…MVGA), 184 to 204 (VAVV…GMLA), 207 to 227 (WVQI…ALMV), 263 to 283 (ISAL…PHIL), 304 to 324 (GFIG…ILLV), 356 to 376 (FFLG…VAGL), 406 to 426 (VSKI…ILFE), 430 to 450 (IAFM…PIIF), 469 to 489 (LGLL…VTIL), and 498 to 518 (YEYP…FFSI).

It belongs to the sodium:solute symporter (SSF) (TC 2.A.21) family.

It is found in the cell inner membrane. Its function is as follows. Transports acetate. The polypeptide is Cation/acetate symporter ActP (Yersinia enterocolitica serotype O:8 / biotype 1B (strain NCTC 13174 / 8081)).